We begin with the raw amino-acid sequence, 419 residues long: MRLGIALFSLIGLCHSVSALIAFPGAEGFGANAVGGRQGEIYVVTNLNDSGEGSLRDAVSATDRIVVFAVGGVIEISDRIVVSKRVTILGQTAPGDGITVYGNGWSFSNADDAIVRYIRIRMGKVGDSGKDAITIAEGSTMIFDHVSVSWGRDETFSISGTASNITIQNTIIAQGLETHSCGGLIQTGGGVSLFRNLYIDNKTRNPKVKGVNDFTNNVVYNWGGGGGYIAGDSSGDSYANIIGNYFISGPSTSVTAFTRGNEYFHGYVETNYYDPDRDGTLNGNELGVSASNYGGMALVDTKYDYPAVEYQMTPGEAVNYVTGYVGASKVRDSVDTQLIAQVKSWGTKGELISDEASMGGPGDLDGGSPPTDSDGDGIPDDAETEIGSDPNTADSMELHSSGYTYVEMWANSLVPSSYH.

A signal peptide spans 1–19 (MRLGIALFSLIGLCHSVSA). N-linked (GlcNAc...) asparagine glycosylation is found at Asn48, Asn164, and Asn201. Arg204 is an active-site residue. Residues 261 to 296 (NEYFHGYVETNYYDPDRDGTLNGNELGVSASNYGGM) enclose the EF-hand domain. Ca(2+)-binding residues include Asp274, Asp276, Asp278, Thr280, and Glu285. The tract at residues 350 to 395 (ELISDEASMGGPGDLDGGSPPTDSDGDGIPDDAETEIGSDPNTADS) is disordered. Residues 373–386 (SDGDGIPDDAETEI) show a composition bias toward acidic residues.

The protein belongs to the polysaccharide lyase 1 family. The cofactor is Ca(2+).

Its subcellular location is the secreted. The enzyme catalyses Eliminative cleavage of (1-&gt;4)-alpha-D-galacturonan to give oligosaccharides with 4-deoxy-alpha-D-galact-4-enuronosyl groups at their non-reducing ends.. Functionally, pectinolytic enzyme consist of four classes of enzymes: pectin lyase, polygalacturonase, pectin methylesterase and rhamnogalacturonase. Among pectinolytic enzymes, pectin lyase is the most important in depolymerization of pectin, since it cleaves internal glycosidic bonds of highly methylated pectins. Favors pectate, the anion, over pectin, the methyl ester. The chain is Probable pectate lyase C (plyC) from Aspergillus terreus (strain NIH 2624 / FGSC A1156).